Here is a 61-residue protein sequence, read N- to C-terminus: Small ribosomal subunit protein uS14 (61 aa).

Positions 24, 27, 40, and 43 each coordinate Zn(2+).

The protein belongs to the universal ribosomal protein uS14 family. Zinc-binding uS14 subfamily. As to quaternary structure, part of the 30S ribosomal subunit. Contacts proteins S3 and S10. Requires Zn(2+) as cofactor.

Its function is as follows. Binds 16S rRNA, required for the assembly of 30S particles and may also be responsible for determining the conformation of the 16S rRNA at the A site. This is Small ribosomal subunit protein uS14 from Thermoanaerobacter sp. (strain X514).